Reading from the N-terminus, the 383-residue chain is uncharacterized protein (383 aa).

2 disordered regions span residues 27–66 and 242–281; these read ENNN…NKKP and LITT…ITRR. 2 stretches are compositionally biased toward low complexity: residues 28–63 and 242–275; these read NNNT…NNNN and LITT…KSSS.

This is an uncharacterized protein from Dictyostelium discoideum (Social amoeba).